The primary structure comprises 185 residues: Serine/arginine-rich splicing factor RSZ21 (185 aa).

Residues 2-73 form the RRM domain; sequence ARLYVGNLDP…WRVELSRNSS (72 aa). Residues 86-103 form a CCHC-type zinc finger; the sequence is MKCYECGETGHFARECRL. Positions 104-185 are disordered; sequence RIGPGGLGSG…DGGRYRRSRS (82 aa). Positions 113–123 are enriched in basic residues; sequence GKRRSRSRSRS. 2 stretches are compositionally biased toward low complexity: residues 124–138 and 151–162; these read RSPQ…GRRS and VSPVRGRSYSRS.

It belongs to the splicing factor SR family. Extensively phosphorylated on serine residues in the RS domain. In terms of tissue distribution, expressed in roots, leaves and immature seeds.

It is found in the nucleus. Involved in pre-mRNA splicing. The polypeptide is Serine/arginine-rich splicing factor RSZ21 (RSZP21) (Oryza sativa subsp. japonica (Rice)).